The primary structure comprises 140 residues: Zinc finger SWIM domain-containing protein 7 (140 aa).

Residues 66 to 114 (YQVLGSSSKTYTCLASCHYCSCPAFAFSVLRKSDSILCKHLLAVYLSQV) form an SWIM-type zinc finger.

The protein belongs to the SWS1 family. As to quaternary structure, interacts with RAD51D and XRCC3; involved in homologous recombination repair. Interacts with SWSAP1; they form a functional complex involved in homologous recombination repair and stabilize each other. As to expression, expressed in ovary and testis.

The protein resides in the nucleus. In terms of biological role, involved in early stages of the homologous recombination repair (HRR) pathway of double-stranded DNA breaks arising during DNA replication or induced by DNA-damaging agents. Required for meiotic progression, hence for fertility. The polypeptide is Zinc finger SWIM domain-containing protein 7 (ZSWIM7) (Homo sapiens (Human)).